The sequence spans 470 residues: Putative ankyrin repeat protein L279 (470 aa).

ANK repeat units lie at residues 119-148 (RDDY…NPGT), 149-178 (NKYA…GSDK), 372-401 (ETQG…NVNE), and 403-431 (NGKP…DISL).

This Acanthamoeba polyphaga (Amoeba) protein is Putative ankyrin repeat protein L279.